A 527-amino-acid chain; its full sequence is Probable protein kinase UbiB (527 aa).

A helical membrane pass occupies residues 23–43 (ELLLELPLPFWLRALSWLLPW). Residues 125–488 (RFDSQPLASA…ESDARDQWPL (364 aa)) enclose the Protein kinase domain. ATP contacts are provided by residues 131–139 (LASASVAQV) and Lys-153. The active-site Proton acceptor is the Asp-288. The chain crosses the membrane as a helical span at residues 504–524 (LAPLLATWPAWLMVGGGLYLV).

It belongs to the ABC1 family. UbiB subfamily.

The protein resides in the cell inner membrane. It functions in the pathway cofactor biosynthesis; ubiquinone biosynthesis [regulation]. In terms of biological role, is probably a protein kinase regulator of UbiI activity which is involved in aerobic coenzyme Q (ubiquinone) biosynthesis. The protein is Probable protein kinase UbiB of Ectopseudomonas mendocina (strain ymp) (Pseudomonas mendocina).